The sequence spans 441 residues: BTB/POZ domain-containing protein At2g24240 (441 aa).

The BTB domain maps to 6 to 76 (DRIKFNVGGR…LRTGDLNVPA (71 aa)).

It participates in protein modification; protein ubiquitination. Its function is as follows. May act as a substrate-specific adapter of an E3 ubiquitin-protein ligase complex (CUL3-RBX1-BTB) which mediates the ubiquitination and subsequent proteasomal degradation of target proteins. In Arabidopsis thaliana (Mouse-ear cress), this protein is BTB/POZ domain-containing protein At2g24240.